Here is a 308-residue protein sequence, read N- to C-terminus: Glycine--tRNA ligase alpha subunit (308 aa).

Belongs to the class-II aminoacyl-tRNA synthetase family. As to quaternary structure, tetramer of two alpha and two beta subunits.

Its subcellular location is the cytoplasm. The catalysed reaction is tRNA(Gly) + glycine + ATP = glycyl-tRNA(Gly) + AMP + diphosphate. In Brucella abortus (strain 2308), this protein is Glycine--tRNA ligase alpha subunit.